The chain runs to 388 residues: Envelope protein F13 homolog (388 aa).

The N-myristoyl glycine; by host moiety is linked to residue G2. Positions 310-337 constitute a PLD phosphodiesterase domain; it reads GDAINNTKLLVVDDEYVHVSNADIDGTH.

It is found in the virion membrane. Its subcellular location is the host endoplasmic reticulum membrane. In terms of biological role, envelope protein associated with the inner side of the enveloped virion (EV) membrane. The chain is Envelope protein F13 homolog (P43K) from Molluscum contagiosum virus subtype 2 (MOCV).